Consider the following 535-residue polypeptide: GMP synthase [glutamine-hydrolyzing] (535 aa).

The region spanning 4–210 (KILILDFGSQ…VHEICKCKPD (207 aa)) is the Glutamine amidotransferase type-1 domain. The active-site Nucleophile is Cys-85. Catalysis depends on residues His-184 and Glu-186. The 193-residue stretch at 211-403 (WVMGDYIAEA…LGLPREMVYR (193 aa)) folds into the GMPS ATP-PPase domain. Residue 238–244 (SGGVDSS) coordinates ATP.

As to quaternary structure, homodimer.

It catalyses the reaction XMP + L-glutamine + ATP + H2O = GMP + L-glutamate + AMP + diphosphate + 2 H(+). The protein operates within purine metabolism; GMP biosynthesis; GMP from XMP (L-Gln route): step 1/1. Catalyzes the synthesis of GMP from XMP. This chain is GMP synthase [glutamine-hydrolyzing], found in Polynucleobacter necessarius subsp. necessarius (strain STIR1).